The sequence spans 324 residues: Tyrosine--tRNA ligase (324 aa).

Tyr36 is an L-tyrosine binding site. Residues 41 to 49 (PSGKVHLGH) carry the 'HIGH' region motif. Residues Tyr158, Gln162, Asp165, and Gln180 each coordinate L-tyrosine. Residues 215 to 219 (KMSSS) carry the 'KMSKS' region motif. Ser218 contacts ATP.

This sequence belongs to the class-I aminoacyl-tRNA synthetase family. TyrS type 3 subfamily. In terms of assembly, homodimer.

The protein resides in the cytoplasm. The enzyme catalyses tRNA(Tyr) + L-tyrosine + ATP = L-tyrosyl-tRNA(Tyr) + AMP + diphosphate + H(+). Catalyzes the attachment of tyrosine to tRNA(Tyr) in a two-step reaction: tyrosine is first activated by ATP to form Tyr-AMP and then transferred to the acceptor end of tRNA(Tyr). The chain is Tyrosine--tRNA ligase from Methanopyrus kandleri (strain AV19 / DSM 6324 / JCM 9639 / NBRC 100938).